Reading from the N-terminus, the 615-residue chain is Elongation factor 4 (615 aa).

A tr-type G domain is found at 14–200; the sequence is SKIRNFCIIA…KVAELIPAPT (187 aa). Residues 26 to 31 and 147 to 150 each bind GTP; these read DHGKST and NKID.

The protein belongs to the TRAFAC class translation factor GTPase superfamily. Classic translation factor GTPase family. LepA subfamily.

The protein resides in the cell membrane. The enzyme catalyses GTP + H2O = GDP + phosphate + H(+). In terms of biological role, required for accurate and efficient protein synthesis under certain stress conditions. May act as a fidelity factor of the translation reaction, by catalyzing a one-codon backward translocation of tRNAs on improperly translocated ribosomes. Back-translocation proceeds from a post-translocation (POST) complex to a pre-translocation (PRE) complex, thus giving elongation factor G a second chance to translocate the tRNAs correctly. Binds to ribosomes in a GTP-dependent manner. This Corynebacterium aurimucosum (strain ATCC 700975 / DSM 44827 / CIP 107346 / CN-1) (Corynebacterium nigricans) protein is Elongation factor 4.